The primary structure comprises 149 residues: Alpha-crystallin A chain (149 aa).

Residues 41–149 (LFRTVLESGI…DTSYSERPIP (109 aa)) form the sHSP domain. Zn(2+)-binding residues include histidine 89, glutamate 91, and histidine 96.

The protein belongs to the small heat shock protein (HSP20) family. In terms of assembly, heteropolymer composed of three CRYAA and one CRYAB subunits. Inter-subunit bridging via zinc ions enhances stability, which is crucial as there is no protein turn over in the lens. Zinc coordination is achieved at least by His-89, Glu-91 and His-96. His-83 and Glu-85 come from the same molecule within the oligomer, while His-90 residue is provided by another molecule. Can also form homodimers and homotetramers (dimers of dimers) which serve as the building blocks of homooligomers.

The protein localises to the cytoplasm. It localises to the nucleus. Functionally, contributes to the transparency and refractive index of the lens. May act as a chaperone, preventing aggregation of various proteins under a wide range of stress conditions. The protein is Alpha-crystallin A chain (CRYAA) of Trachemys scripta elegans (Red-eared slider turtle).